The primary structure comprises 135 residues: Succinate dehydrogenase assembly factor 3, mitochondrial (135 aa).

The disordered stretch occupies residues 73-101 (KENSNNNDNYNNNNNDNNNDNNNFINIGQ). Residues 75–95 (NSNNNDNYNNNNNDNNNDNNN) show a composition bias toward low complexity.

This sequence belongs to the complex I LYR family. SDHAF3 subfamily. In terms of assembly, interacts with the iron-sulfur protein subunit within the SDH catalytic dimer.

It localises to the mitochondrion matrix. Functionally, plays an essential role in the assembly of succinate dehydrogenase (SDH), an enzyme complex (also referred to as respiratory complex II) that is a component of both the tricarboxylic acid (TCA) cycle and the mitochondrial electron transport chain, and which couples the oxidation of succinate to fumarate with the reduction of ubiquinone (coenzyme Q) to ubiquinol. Promotes maturation of the iron-sulfur protein subunit of the SDH catalytic dimer, protecting it from the deleterious effects of oxidants. May act together with SDHAF1. The polypeptide is Succinate dehydrogenase assembly factor 3, mitochondrial (acn9) (Dictyostelium discoideum (Social amoeba)).